Reading from the N-terminus, the 207-residue chain is Holliday junction resolvase RecU (207 aa).

The disordered stretch occupies residues 1–21 (MTIRYPNGQVYRQPGPTKSKS). Threonine 87, aspartate 89, glutamate 102, and glutamine 121 together coordinate Mg(2+).

This sequence belongs to the RecU family. Requires Mg(2+) as cofactor.

The protein localises to the cytoplasm. The enzyme catalyses Endonucleolytic cleavage at a junction such as a reciprocal single-stranded crossover between two homologous DNA duplexes (Holliday junction).. Functionally, endonuclease that resolves Holliday junction intermediates in genetic recombination. Cleaves mobile four-strand junctions by introducing symmetrical nicks in paired strands. Promotes annealing of linear ssDNA with homologous dsDNA. Required for DNA repair, homologous recombination and chromosome segregation. The chain is Holliday junction resolvase RecU from Lactiplantibacillus plantarum (strain ATCC BAA-793 / NCIMB 8826 / WCFS1) (Lactobacillus plantarum).